A 112-amino-acid chain; its full sequence is UPF0482 protein Ent638_1930 (112 aa).

An N-terminal signal peptide occupies residues 1–27 (MTTLRKRLCLATLLSLTALAFTAPVSA).

The protein belongs to the UPF0482 family.

This is UPF0482 protein Ent638_1930 from Enterobacter sp. (strain 638).